A 51-amino-acid chain; its full sequence is Large ribosomal subunit protein eL39 (51 aa).

The protein belongs to the eukaryotic ribosomal protein eL39 family. Interacts with YIH1.

This chain is Large ribosomal subunit protein eL39 (RPL39), found in Kluyveromyces lactis (strain ATCC 8585 / CBS 2359 / DSM 70799 / NBRC 1267 / NRRL Y-1140 / WM37) (Yeast).